The sequence spans 264 residues: Shikimate dehydrogenase (NADP(+)) (264 aa).

Residues 14-16 (SVS) and T61 each bind shikimate. The active-site Proton acceptor is the K65. Positions 85 and 99 each coordinate shikimate. NADP(+) contacts are provided by residues 122 to 126 (GAGGA), 145 to 150 (NRTVSR), and A208. Y210 serves as a coordination point for shikimate. An NADP(+)-binding site is contributed by G231.

It belongs to the shikimate dehydrogenase family. In terms of assembly, homodimer.

The enzyme catalyses shikimate + NADP(+) = 3-dehydroshikimate + NADPH + H(+). Its pathway is metabolic intermediate biosynthesis; chorismate biosynthesis; chorismate from D-erythrose 4-phosphate and phosphoenolpyruvate: step 4/7. In terms of biological role, involved in the biosynthesis of the chorismate, which leads to the biosynthesis of aromatic amino acids. Catalyzes the reversible NADPH linked reduction of 3-dehydroshikimate (DHSA) to yield shikimate (SA). In Natronomonas pharaonis (strain ATCC 35678 / DSM 2160 / CIP 103997 / JCM 8858 / NBRC 14720 / NCIMB 2260 / Gabara) (Halobacterium pharaonis), this protein is Shikimate dehydrogenase (NADP(+)).